A 499-amino-acid polypeptide reads, in one-letter code: Lysine--tRNA ligase (499 aa).

Mg(2+) contacts are provided by Glu408 and Glu415.

Belongs to the class-II aminoacyl-tRNA synthetase family. Homodimer. Mg(2+) is required as a cofactor.

It is found in the cytoplasm. The enzyme catalyses tRNA(Lys) + L-lysine + ATP = L-lysyl-tRNA(Lys) + AMP + diphosphate. The polypeptide is Lysine--tRNA ligase (Bacillus mycoides (strain KBAB4) (Bacillus weihenstephanensis)).